Here is a 1032-residue protein sequence, read N- to C-terminus: Unconventional myosin-Ih (1032 aa).

Residues 12 to 701 (GVQDFVLLDA…TLFATEDAFE (690 aa)) enclose the Myosin motor domain. 105–112 (GESGAGKT) lines the ATP pocket. Ser-365 bears the Phosphoserine mark. Positions 578-600 (LSSLLETLISKEPSYIRCIKPND) are actin-binding. IQ domains are found at residues 704–726 (KHQLVARIQATYKRCLGRREYVK) and 727–756 (KRQAAIKLEAHWRGALARKAIQRRKWAVRI). Positions 855-1029 (KDGYTESLNQ…NGQLTVVSVR (175 aa)) constitute a TH1 domain.

It belongs to the TRAFAC class myosin-kinesin ATPase superfamily. Myosin family.

Its function is as follows. Myosins are actin-based motor molecules with ATPase activity. Unconventional myosins serve in intracellular movements. Their highly divergent tails are presumed to bind to membranous compartments, which would be moved relative to actin filaments. The protein is Unconventional myosin-Ih (MYO1H) of Homo sapiens (Human).